The chain runs to 159 residues: FCS-Like Zinc finger 2 (159 aa).

Residues 75–119 (HFLDSCFLCKKRLGDNRDIFMYRGDTPFCSEECREEQIERDEAKE) form an FLZ-type zinc finger. The segment covering 113-122 (ERDEAKEKKQ) has biased composition (basic and acidic residues). Residues 113 to 159 (ERDEAKEKKQSLSTSVKAMRRNEKRSSSSSPTRSRNYAFRTGTVAAA) form a disordered region.

The protein belongs to the FLZ family. In terms of assembly, interacts with KIN10 and KIN11 via its FLZ-type zinc finger domain. Interacts with KINB1, KINB2, KINB3 and SNF4 via its N-terminal part. Forms heterodimer with FLZ7, FLZ10, FLZ11, FLZ12, FLZ15, FLZ17 and FLZ18 in vitro.

Functionally, may act as an adapter to facilitate the interaction of SnRK1 complex with effector proteins, conferring tissue- and stimulus-type specific differences in the SnRK1 regulation pathway. This is FCS-Like Zinc finger 2 from Arabidopsis thaliana (Mouse-ear cress).